We begin with the raw amino-acid sequence, 722 residues long: Endoglucanase F (722 aa).

Positions 1–29 are cleaved as a signal peptide; that stretch reads MSKNFKRVGAVAVAAAMSLSIMATTSINA. The segment at 142–165 is disordered; sequence PEFQDPSKYPSPLDTSQPVGRDPI. Positions 154 to 165 are enriched in polar residues; sequence LDTSQPVGRDPI. The 62-residue stretch at 661 to 722 folds into the Dockerin domain; sequence PEKLLGDVNG…LLKKALLSIQ (62 aa).

The protein belongs to the glycosyl hydrolase 48 (cellulase L) family.

The catalysed reaction is Endohydrolysis of (1-&gt;4)-beta-D-glucosidic linkages in cellulose, lichenin and cereal beta-D-glucans.. Its function is as follows. Probable endoglucanase involved in the degradation of cellulose or related beta-glucans. The chain is Endoglucanase F (celCCF) from Ruminiclostridium cellulolyticum (strain ATCC 35319 / DSM 5812 / JCM 6584 / H10) (Clostridium cellulolyticum).